A 311-amino-acid polypeptide reads, in one-letter code: Probable hydrogen peroxide-inducible genes activator (311 aa).

Positions 8-65 (PTIAGLRAFVAVAEKRQFSGAATALGVSQSTLSQVLAALEAGLGTQLVERSTRRVFLT) constitute an HTH lysR-type domain. The segment at residues 25 to 44 (FSGAATALGVSQSTLSQVLA) is a DNA-binding region (H-T-H motif).

This sequence belongs to the LysR transcriptional regulatory family.

In terms of biological role, required for the induction the katG gene for catalase. Involved in the response to hydrogen peroxide. In Mycobacterium avium, this protein is Probable hydrogen peroxide-inducible genes activator (oxyR).